The sequence spans 501 residues: Solute carrier family 2, facilitated glucose transporter member 5 (501 aa).

N-acetylmethionine is present on Met-1. Over 1–18 the chain is Cytoplasmic; it reads MEQQDPIKKEGRLTPVLA. Residues 19 to 39 traverse the membrane as a helical segment; it reads LATLIAAFGSSFQYGYNVAAV. Residue Tyr-32 participates in D-fructose binding. The Extracellular segment spans residues 40 to 68; sequence NSPAELMKAFYNETHYSRFSEYISEFSLT. Asn-51 carries an N-linked (GlcNAc...) asparagine glycan. Residues 69 to 91 traverse the membrane as a helical segment; that stretch reads LLWSISVSMFPFGGFVGSLMVGP. Residues 92–98 lie on the Cytoplasmic side of the membrane; sequence LVNRLGR. A helical membrane pass occupies residues 99–119; the sequence is KGTLLFNNIFSIVPAILMGTS. At 120 to 126 the chain is on the extracellular side; that stretch reads KTARSYE. Residues 127–149 form a helical membrane-spanning segment; that stretch reads MIILSRLLVGICAGLSSNVVPMY. The Cytoplasmic segment spans residues 150-161; sequence LGELSPKNLRGA. Residues 162–182 form a helical membrane-spanning segment; it reads LGVVPQLFITVGILVAQIVGL. Gln-167 lines the D-fructose pocket. Residues 183–192 lie on the Extracellular side of the membrane; that stretch reads RSLLATEEGW. The chain crosses the membrane as a helical span at residues 193 to 213; it reads PILLGLTAIPAALQLLLLPFF. Topologically, residues 214–277 are cytoplasmic; it reads PESPRYLLIQ…MFRMRSLRWQ (64 aa). The helical transmembrane segment at 278-298 threads the bilayer; sequence VISIIILMGGQQLSGVNAIYY. Residues Gln-288 and 296 to 298 each bind D-fructose; that span reads IYY. The Extracellular portion of the chain corresponds to 299-313; sequence YADQIYLSAGVKDQD. The chain crosses the membrane as a helical span at residues 314–334; it reads VQYVTVGTGAVNVLMTICAVF. Residues 335–342 lie on the Cytoplasmic side of the membrane; it reads VVEYLGRR. The chain crosses the membrane as a helical span at residues 343–363; the sequence is ALLLLGFSVCFIACCVLTVAL. The Extracellular portion of the chain corresponds to 364 to 371; sequence ALQDRVSW. A helical membrane pass occupies residues 372 to 394; that stretch reads MPYISIVCVISYVIGHALGPSPI. Residue His-387 coordinates D-fructose. The Cytoplasmic segment spans residues 395–412; that stretch reads PALLITEVFLQSSRSAAY. Residues 413-433 traverse the membrane as a helical segment; the sequence is MVGGTVHWLSNFAVGLVFPFI. 419-420 is a binding site for D-fructose; it reads HW. Over 434 to 439 the chain is Extracellular; that stretch reads QVGLGA. A helical transmembrane segment spans residues 440-460; the sequence is YSFIIFAVICLLTTIYIFLIV. At 461-501 the chain is on the cytoplasmic side; that stretch reads PETKGKTFVEINHIFTKMNKVSDVHPAKDELKDIPLSAVEL.

Belongs to the major facilitator superfamily. Sugar transporter (TC 2.A.1.1) family. Glucose transporter subfamily.

The protein resides in the apical cell membrane. It is found in the cell membrane. The protein localises to the sarcolemma. It catalyses the reaction D-fructose(out) = D-fructose(in). Its function is as follows. Functions as a fructose transporter that has only low activity with other monosaccharides. Can mediate the uptake of deoxyglucose, but with low efficiency. Essential for fructose uptake in the small intestine. Plays a role in the regulation of salt uptake and blood pressure in response to dietary fructose. Required for the development of high blood pressure in response to high dietary fructose intake. The chain is Solute carrier family 2, facilitated glucose transporter member 5 from Equus caballus (Horse).